A 359-amino-acid polypeptide reads, in one-letter code: tRNA-specific 2-thiouridylase MnmA (359 aa).

ATP is bound by residues 9–16 and Met-35; that span reads GMSGGVDS. Cys-104 serves as the catalytic Nucleophile. An intrachain disulfide couples Cys-104 to Cys-200. Residue Gly-128 coordinates ATP. Residues 150–152 form an interaction with tRNA region; it reads KDQ. Cys-200 (cysteine persulfide intermediate) is an active-site residue. An interaction with tRNA region spans residues 306-307; it reads RY.

It belongs to the MnmA/TRMU family.

Its subcellular location is the cytoplasm. It carries out the reaction S-sulfanyl-L-cysteinyl-[protein] + uridine(34) in tRNA + AH2 + ATP = 2-thiouridine(34) in tRNA + L-cysteinyl-[protein] + A + AMP + diphosphate + H(+). Catalyzes the 2-thiolation of uridine at the wobble position (U34) of tRNA, leading to the formation of s(2)U34. The chain is tRNA-specific 2-thiouridylase MnmA from Clostridium perfringens (strain ATCC 13124 / DSM 756 / JCM 1290 / NCIMB 6125 / NCTC 8237 / Type A).